The chain runs to 248 residues: tRNA (guanine-N(1)-)-methyltransferase (248 aa).

S-adenosyl-L-methionine contacts are provided by residues G116 and 135–140 (IGDFVL).

Belongs to the RNA methyltransferase TrmD family. In terms of assembly, homodimer.

Its subcellular location is the cytoplasm. The catalysed reaction is guanosine(37) in tRNA + S-adenosyl-L-methionine = N(1)-methylguanosine(37) in tRNA + S-adenosyl-L-homocysteine + H(+). Specifically methylates guanosine-37 in various tRNAs. The polypeptide is tRNA (guanine-N(1)-)-methyltransferase (Anaeromyxobacter sp. (strain Fw109-5)).